Reading from the N-terminus, the 75-residue chain is UPF0291 protein Teth39_0326 (75 aa).

This sequence belongs to the UPF0291 family.

Its subcellular location is the cytoplasm. The chain is UPF0291 protein Teth39_0326 from Thermoanaerobacter pseudethanolicus (strain ATCC 33223 / 39E) (Clostridium thermohydrosulfuricum).